The sequence spans 141 residues: Phage-like element PBSX protein XkdS (141 aa).

It to B.subtilis YqbS.

The polypeptide is Phage-like element PBSX protein XkdS (xkdS) (Bacillus subtilis (strain 168)).